The chain runs to 89 residues: Phosphocarrier protein HPr (89 aa).

An HPr domain is found at 1-88; the sequence is MLQRDTTIIN…ALIANRFGEG (88 aa). His15 serves as the catalytic Pros-phosphohistidine intermediate.

The protein belongs to the HPr family.

It localises to the cytoplasm. General (non sugar-specific) component of the phosphoenolpyruvate-dependent sugar phosphotransferase system (sugar PTS). This major carbohydrate active-transport system catalyzes the phosphorylation of incoming sugar substrates concomitantly with their translocation across the cell membrane. The phosphoryl group from phosphoenolpyruvate (PEP) is transferred to the phosphoryl carrier protein HPr by enzyme I. Phospho-HPr then transfers it to the PTS EIIA domain. The sequence is that of Phosphocarrier protein HPr (phbH) from Cupriavidus necator (strain ATCC 17699 / DSM 428 / KCTC 22496 / NCIMB 10442 / H16 / Stanier 337) (Ralstonia eutropha).